The sequence spans 758 residues: 5-methyltetrahydropteroyltriglutamate--homocysteine methyltransferase (758 aa).

5-methyltetrahydropteroyltri-L-glutamate is bound by residues 17-20 and lysine 110; that span reads RELK. L-homocysteine is bound by residues 428–430 and glutamate 481; that span reads IGS. Residues 428–430 and glutamate 481 each bind L-methionine; that span reads IGS. 5-methyltetrahydropteroyltri-L-glutamate is bound by residues 512 to 513 and tryptophan 558; that span reads RC. An L-homocysteine-binding site is contributed by aspartate 596. Aspartate 596 serves as a coordination point for L-methionine. A 5-methyltetrahydropteroyltri-L-glutamate-binding site is contributed by glutamate 602. Zn(2+)-binding residues include histidine 638, cysteine 640, and glutamate 662. Histidine 691 acts as the Proton donor in catalysis. A Zn(2+)-binding site is contributed by cysteine 723.

Belongs to the vitamin-B12 independent methionine synthase family. The cofactor is Zn(2+).

It catalyses the reaction 5-methyltetrahydropteroyltri-L-glutamate + L-homocysteine = tetrahydropteroyltri-L-glutamate + L-methionine. The protein operates within amino-acid biosynthesis; L-methionine biosynthesis via de novo pathway; L-methionine from L-homocysteine (MetE route): step 1/1. Functionally, catalyzes the transfer of a methyl group from 5-methyltetrahydrofolate to homocysteine resulting in methionine formation. This Thermosynechococcus vestitus (strain NIES-2133 / IAM M-273 / BP-1) protein is 5-methyltetrahydropteroyltriglutamate--homocysteine methyltransferase.